The following is a 946-amino-acid chain: Bifunctional glutamine synthetase adenylyltransferase/adenylyl-removing enzyme (946 aa).

Residues 1–440 (MKPLSSPLQQ…VFNELIGDDE (440 aa)) form an adenylyl removase region. Residues 449 to 946 (SEQWRELWQD…ASWQKWLVEE (498 aa)) are adenylyl transferase.

This sequence belongs to the GlnE family. Requires Mg(2+) as cofactor.

It catalyses the reaction [glutamine synthetase]-O(4)-(5'-adenylyl)-L-tyrosine + phosphate = [glutamine synthetase]-L-tyrosine + ADP. The catalysed reaction is [glutamine synthetase]-L-tyrosine + ATP = [glutamine synthetase]-O(4)-(5'-adenylyl)-L-tyrosine + diphosphate. In terms of biological role, involved in the regulation of glutamine synthetase GlnA, a key enzyme in the process to assimilate ammonia. When cellular nitrogen levels are high, the C-terminal adenylyl transferase (AT) inactivates GlnA by covalent transfer of an adenylyl group from ATP to specific tyrosine residue of GlnA, thus reducing its activity. Conversely, when nitrogen levels are low, the N-terminal adenylyl removase (AR) activates GlnA by removing the adenylyl group by phosphorolysis, increasing its activity. The regulatory region of GlnE binds the signal transduction protein PII (GlnB) which indicates the nitrogen status of the cell. This is Bifunctional glutamine synthetase adenylyltransferase/adenylyl-removing enzyme from Escherichia coli (strain SE11).